The chain runs to 430 residues: Retinoic acid receptor RXR-alpha-A (430 aa).

A compositionally biased stretch (low complexity) spans 1–20 (MHPSLLSPTSLGPSGSLHSP). 2 disordered regions span residues 1–25 (MHPS…STLS) and 48–73 (ASPG…SSSE). The segment at 1-99 (MHPSLLSPTS…QPSGTPLSLT (99 aa)) is modulating. A compositionally biased stretch (polar residues) spans 58-72 (ISPQLNSHMNSVSSS). A DNA-binding region (nuclear receptor) is located at residues 100-175 (KHICAICGDR…MGMKREAVQE (76 aa)). Positions 103, 106, 120, and 123 each coordinate Zn(2+). An NR C4-type zinc finger spans residues 103 to 123 (CAICGDRSSGKHYGVYSCEGC). A nuclear localization signal region spans residues 128 to 133 (KRTVRK). Zn(2+) contacts are provided by Cys-139, Cys-145, Cys-155, and Cys-158. The segment at 139 to 158 (CRDNKDCVIDKRQRNRCQYC) adopts an NR C4-type zinc-finger fold. The segment covering 174-186 (QEERQRAKERSEN) has biased composition (basic and acidic residues). A disordered region spans residues 174–196 (QEERQRAKERSENEVESTSSANE). Positions 176 to 192 (ERQRAKERSENEVESTS) are hinge. Positions 195 to 426 (NEDMPVEKIL…TFLMEMLEAP (232 aa)) constitute an NR LBD domain. 9-cis-retinoate contacts are provided by Arg-284 and Ala-295. The all-trans-retinoate site is built by Arg-284 and Ala-295. Residues 316–336 (RVLTELVSKMRDMQMDKTELG) form a required for nuclear export region. Residues 415 to 426 (IDTFLMEMLEAP) form an AF-2 region.

This sequence belongs to the nuclear hormone receptor family. NR2 subfamily. In terms of assembly, homodimer. Heterodimer; with a rar molecule. Binds DNA preferentially as a rar/rxr heterodimer.

The protein resides in the nucleus. In terms of biological role, receptor for retinoic acid that acts as a transcription factor. Forms homo- or heterodimers with retinoic acid receptors (rars) and binds to target response elements in response to their ligands, all-trans or 9-cis retinoic acid, to regulate gene expression in various biological processes. The rar/rxr heterodimers bind to the retinoic acid response elements (RARE) composed of tandem 5'-AGGTCA-3' sites known as DR1-DR5 to regulate transcription. The high affinity ligand for rxrs is 9-cis retinoic acid. In the absence of ligand, the rar/rxr heterodimers associate with a multiprotein complex containing transcription corepressors that induce histone deacetylation, chromatin condensation and transcriptional suppression. On ligand binding, the corepressors dissociate from the receptors and coactivators are recruited leading to transcriptional activation. This is Retinoic acid receptor RXR-alpha-A from Danio rerio (Zebrafish).